The chain runs to 1590 residues: von Willebrand factor D and EGF domain-containing protein (1590 aa).

The first 20 residues, M1–A20, serve as a signal peptide directing secretion. A glycan (N-linked (GlcNAc...) asparagine) is linked at N367. The VWFD domain maps to A423 to M606. Intrachain disulfides connect C425–C565 and C468–C477. Residues N703 and N968 are each glycosylated (N-linked (GlcNAc...) asparagine). Residues T1177–E1216 enclose the EGF-like 1 domain. 3 disulfides stabilise this stretch: C1181–C1189, C1183–C1204, and C1206–C1215. The span at D1268–A1280 shows a compositional bias: basic and acidic residues. A disordered region spans residues D1268–K1288. 6 consecutive EGF-like domains span residues A1294–Q1326, D1358–E1390, S1422–Q1454, N1455–Q1486, N1518–Q1550, and I1551–E1582. Intrachain disulfides connect C1298-C1308, C1302-C1314, C1316-C1325, C1362-C1372, C1366-C1378, C1380-C1389, C1426-C1436, C1430-C1442, C1444-C1453, C1458-C1468, C1462-C1474, C1522-C1532, C1526-C1538, C1540-C1549, C1554-C1564, C1558-C1570, and C1572-C1581.

The protein resides in the secreted. The polypeptide is von Willebrand factor D and EGF domain-containing protein (VWDE) (Homo sapiens (Human)).